Reading from the N-terminus, the 313-residue chain is N(5)-(carboxyethyl)ornithine synthase (313 aa).

Pyruvate is bound by residues Arg-15, Lys-71, and His-92. Residue 171 to 176 coordinates NADP(+); sequence GSGNVA.

It belongs to the AlaDH/PNT family. CEOS subfamily. In terms of assembly, homotetramer.

The enzyme catalyses N(5)-[1(S)-1-carboxyethyl]-L-ornithine + NADP(+) + H2O = L-ornithine + pyruvate + NADPH + H(+). Is potently inhibited by the reaction product N(5)-(L-1-carboxyethyl)-L-ornithine. In terms of biological role, catalyzes the NADPH-dependent reductive condensation between pyruvic acid and the side chain amino group of L-ornithine to form N(5)-(L-1-carboxyethyl)-L-ornithine. To a lesser extent, can also use L-lysine as substrate (yielding N(6)-(L-1-carboxyethyl)-L-lysine). NADH cannot replace NADPH in the condensation reaction. The sequence is that of N(5)-(carboxyethyl)ornithine synthase (ceo) from Lactococcus lactis subsp. lactis (Streptococcus lactis).